A 468-amino-acid chain; its full sequence is Glycosyl hydrolase family 109 protein (468 aa).

The signal sequence occupies residues 1–19 (MVYKVFLSLCIGLALSASA). NAD(+) contacts are provided by residues 67 to 68 (MR), aspartate 89, 138 to 141 (WKTH), 158 to 159 (EV), and asparagine 187. Substrate contacts are provided by residues tyrosine 216, arginine 232, 244 to 247 (YATH), and tyrosine 322. Residue tyrosine 244 coordinates NAD(+).

The protein belongs to the Gfo/Idh/MocA family. Glycosyl hydrolase 109 subfamily. It depends on NAD(+) as a cofactor.

In terms of biological role, glycosidase. In Porphyromonas gingivalis (strain ATCC BAA-308 / W83), this protein is Glycosyl hydrolase family 109 protein.